Here is a 507-residue protein sequence, read N- to C-terminus: Cobyric acid synthase (507 aa).

Residues 259–456 (EIQIAVIKLP…LHGIFDNGTW (198 aa)) enclose the GATase cobBQ-type domain. Residue Cys-340 is the Nucleophile of the active site. His-448 is a catalytic residue.

This sequence belongs to the CobB/CobQ family. CobQ subfamily.

It participates in cofactor biosynthesis; adenosylcobalamin biosynthesis. Catalyzes amidations at positions B, D, E, and G on adenosylcobyrinic A,C-diamide. NH(2) groups are provided by glutamine, and one molecule of ATP is hydrogenolyzed for each amidation. The polypeptide is Cobyric acid synthase (Prochlorococcus marinus (strain SARG / CCMP1375 / SS120)).